The sequence spans 129 residues: Large ribosomal subunit protein bL12 (129 aa).

Belongs to the bacterial ribosomal protein bL12 family. In terms of assembly, homodimer. Part of the ribosomal stalk of the 50S ribosomal subunit. Forms a multimeric L10(L12)X complex, where L10 forms an elongated spine to which 2 to 4 L12 dimers bind in a sequential fashion. Binds GTP-bound translation factors.

Functionally, forms part of the ribosomal stalk which helps the ribosome interact with GTP-bound translation factors. Is thus essential for accurate translation. This chain is Large ribosomal subunit protein bL12, found in Solidesulfovibrio magneticus (strain ATCC 700980 / DSM 13731 / RS-1) (Desulfovibrio magneticus).